The following is a 700-amino-acid chain: Methionine--tRNA ligase (700 aa).

The short motif at Pro12–His22 is the 'HIGH' region element. Zn(2+) contacts are provided by Cys143, Cys146, Cys156, and Cys159. The short motif at Lys348–Ser352 is the 'KMSKS' region element. Lys351 serves as a coordination point for ATP. Positions Asp594–His700 constitute a tRNA-binding domain.

Belongs to the class-I aminoacyl-tRNA synthetase family. MetG type 1 subfamily. Homodimer. Requires Zn(2+) as cofactor.

It localises to the cytoplasm. The enzyme catalyses tRNA(Met) + L-methionine + ATP = L-methionyl-tRNA(Met) + AMP + diphosphate. Is required not only for elongation of protein synthesis but also for the initiation of all mRNA translation through initiator tRNA(fMet) aminoacylation. The sequence is that of Methionine--tRNA ligase from Albidiferax ferrireducens (strain ATCC BAA-621 / DSM 15236 / T118) (Rhodoferax ferrireducens).